The sequence spans 475 residues: FAD-dependent monooxygenase penE (475 aa).

Residues Glu-35, Gly-49, and Arg-108 each contribute to the FAD site. The active site involves Tyr-216. 2 residues coordinate FAD: Asp-308 and Ala-321. Asn-437 is a glycosylation site (N-linked (GlcNAc...) asparagine). The chain crosses the membrane as a helical span at residues 446–466 (WGSIWLSPVILCLFCMLFLWP).

It belongs to the paxM FAD-dependent monooxygenase family. The cofactor is FAD.

The protein localises to the membrane. It catalyses the reaction [(1'E)-3'-hydroxy-3',7'-dimethylocta-1',6'-dien-1'-yl]-quinolinone B + NADPH + O2 + H(+) = [(1'E)-5'-(3',3'-dimethyloxiran-2'-yl)-3'-hydroxy-3'-methylpent-1'-en-1'-yl]-quinolinone B + NADP(+) + H2O. It functions in the pathway secondary metabolite biosynthesis. It participates in alkaloid biosynthesis. The protein operates within mycotoxin biosynthesis. FAD-dependent monooxygenase; part of the gene cluster that mediates the biosynthesis of penigequinolones, potent insecticidal alkaloids that contain a highly modified 10-carbon prenyl group. The first stage is catalyzed by the nonribosomal peptide synthetase penN that condenses anthranilic acid and O-methyl-L-tyrosine to produce 4'-methoxycyclopeptin. 4'-methoxycyclopeptin is then converted to 4'-methoxydehydrocyclopeptin by the ketoglutarate-dependent dioxygenase penM through dehydrogenation to form a double bond between C-alpha and C-beta of the O-methyltyrosine side chain. PenM also converts its first product methoxydehydrocyclopeptin to 4'-methoxycyclopenin. The following conversion of 4'methoxycyclopenin into 4'-methoxyviridicatin is catalyzed by the cyclopenase penL. 4'-methoxyviridicatin is the precursor of quinolone natural products, and is further converted to quinolinone B. The prenyltransferase penI then catalyzes the canonical Friedel-Crafts alkylation of quinolinone B with dimethylallyl cation to yield dimethylallyl quinolone, which is subjected to FAD-dependent dehydrogenation by the FAD-linked oxidoreductase penH to yield conjugated aryl diene. The delta(3') double bond then serves as the site of the second alkylation with DMAPP catalyzed by the prenyltransferase penG to yield a carbenium ion intermediate, which can be attacked by H(2)O to yield a styrenyl quinolone containing a C3'-hydroxyprenyl chain, or undergo cyclization to yield yaequinolones J1 and J2. The conversion of the styrenyl quinolone into the tetrahydrofuran-containing yaequinolone C is performed by the FAD-dependent monooxygenase penE and involves epoxidation of the terminal C7'-C8' olefin, followed by epoxide ring opening initiated by the C3' hydroxyl group. The predicted cysteine hydrolase penJ acts as an epoxide hydrolase that enhances the rate of the 5-exo-tet cyclization step, increasing the yield of yaequinolone C. PenF catalyzes the cationic rearrangement of the epoxide formed by penE (before ring opening to produce yaequinolone C) into yaequinolone D. Finally, the short-chain dehydrogenase/reductase (SDR)-like reductase penD, catalyzes both the dehydration of yaequinolone D and the reduction of the resulting oxonium to yield penigequinolone. This chain is FAD-dependent monooxygenase penE, found in Penicillium thymicola.